The following is a 501-amino-acid chain: Lysine--tRNA ligase (501 aa).

Mg(2+) is bound by residues E402 and E409.

Belongs to the class-II aminoacyl-tRNA synthetase family. Homodimer. Mg(2+) is required as a cofactor.

The protein resides in the cytoplasm. It catalyses the reaction tRNA(Lys) + L-lysine + ATP = L-lysyl-tRNA(Lys) + AMP + diphosphate. The sequence is that of Lysine--tRNA ligase from Helicobacter pylori (strain P12).